A 37-amino-acid polypeptide reads, in one-letter code: Large ribosomal subunit protein bL36c (37 aa).

This sequence belongs to the bacterial ribosomal protein bL36 family.

It localises to the plastid. Its subcellular location is the chloroplast. The protein is Large ribosomal subunit protein bL36c of Cryptomeria japonica (Japanese cedar).